The sequence spans 120 residues: NAD(P)H-quinone oxidoreductase subunit 3, chloroplastic (120 aa).

3 consecutive transmembrane segments (helical) span residues Leu14–Ile34, Met64–Met84, and Val88–Ser108.

This sequence belongs to the complex I subunit 3 family. In terms of assembly, NDH is composed of at least 16 different subunits, 5 of which are encoded in the nucleus.

It is found in the plastid. Its subcellular location is the chloroplast thylakoid membrane. The enzyme catalyses a plastoquinone + NADH + (n+1) H(+)(in) = a plastoquinol + NAD(+) + n H(+)(out). It carries out the reaction a plastoquinone + NADPH + (n+1) H(+)(in) = a plastoquinol + NADP(+) + n H(+)(out). Its function is as follows. NDH shuttles electrons from NAD(P)H:plastoquinone, via FMN and iron-sulfur (Fe-S) centers, to quinones in the photosynthetic chain and possibly in a chloroplast respiratory chain. The immediate electron acceptor for the enzyme in this species is believed to be plastoquinone. Couples the redox reaction to proton translocation, and thus conserves the redox energy in a proton gradient. The sequence is that of NAD(P)H-quinone oxidoreductase subunit 3, chloroplastic from Cicer arietinum (Chickpea).